Reading from the N-terminus, the 355-residue chain is Chemerin-like receptor 2 (355 aa).

The Extracellular portion of the chain corresponds to 1–41 (MEDLEETLFEEFENYSYALDYYSLESDLEEKVQLGVVHWVS). N-linked (GlcNAc...) asparagine glycosylation occurs at N14. Residues 42-62 (LVLYCLSFVLGIPGNAIVIWF) traverse the membrane as a helical segment. Residues 63–73 (TGFKWKRTVST) are Cytoplasmic-facing. A helical membrane pass occupies residues 74-94 (LWFLNLAIADFIFLLFLPLYI). Residues 95 to 112 (SYVVMNFHWPFGIWLCKA) lie on the Extracellular side of the membrane. Cysteines 110 and 187 form a disulfide. The chain crosses the membrane as a helical span at residues 113-133 (NSFTAQLNMFASVFFLTVISL). The Cytoplasmic portion of the chain corresponds to 134 to 154 (DHYIHLIHPVLSHRHRTLKNS). Residues 155-175 (LIVIIFIWLLASLIGGPALYF) traverse the membrane as a helical segment. Residues 176 to 210 (RDTVEFNNHTLCYNNFQKHDPDLTVIRHHVLTWVK) are Extracellular-facing. The helical transmembrane segment at 211–231 (YIVGYLFPLLTMSICYLCLIL) threads the bilayer. The Cytoplasmic segment spans residues 232–247 (KVKKRSILISSRHFWT). The chain crosses the membrane as a helical span at residues 248–268 (ILAVVVAFVVCWTPYHLFSIW). The Extracellular segment spans residues 269-286 (ELTIHHNSYSHHVMQAGI). The chain crosses the membrane as a helical span at residues 287 to 307 (PLSTGLAFLNSCLNPILYVLI). Residues 308–355 (SKKFQARFRSSVAEILKYTLWEVSCSGTVSEQLRNSETKNLCLLETAQ) are Cytoplasmic-facing.

This sequence belongs to the chemokine-like receptor (CMKLR) family.

It is found in the cell membrane. Receptor for chemoattractant adipokine chemerin/RARRES2 suggesting a role for this receptor in the regulation of inflammation and energy homesotasis. Signals mainly via beta-arrestin pathway. Binding of RARRES2 activates weakly G proteins, calcium mobilization and MAPK1/MAPK3 (ERK1/2) phosphorylation too. Acts also as a receptor for TAFA1, mediates its effects on neuronal stem-cell proliferation and differentiation via the activation of ROCK/ERK and ROCK/STAT3 signaling pathway. The sequence is that of Chemerin-like receptor 2 (CMKLR2) from Macaca fascicularis (Crab-eating macaque).